A 441-amino-acid polypeptide reads, in one-letter code: Serine carboxypeptidase-like 2 (441 aa).

The first 29 residues, Met1 to Ser29, serve as a signal peptide directing secretion. Intrachain disulfides connect Cys88–Cys331, Cys252–Cys266, and Cys290–Cys297. Residue Asn109 is glycosylated (N-linked (GlcNAc...) asparagine). Ser184 is an active-site residue. The N-linked (GlcNAc...) asparagine glycan is linked to Asn350. Asp366 is a catalytic residue. N-linked (GlcNAc...) asparagine glycosylation occurs at Asn382. Residue His419 is part of the active site.

It belongs to the peptidase S10 family. In terms of tissue distribution, expressed in seedlings and roots.

The protein localises to the secreted. In terms of biological role, probable carboxypeptidase. The polypeptide is Serine carboxypeptidase-like 2 (SCPL2) (Arabidopsis thaliana (Mouse-ear cress)).